Here is an 846-residue protein sequence, read N- to C-terminus: MLSGVWFLSVLTVAGILQTESRKTAKDICKIRCLCEEKENVLNINCENKGFTTVSLLQPPQYRIYQLFLNGNLLTRLYPNEFVNYSNAVTLHLGNNGLQEIRPGAFSGLKTLKRLHLNNNKLEVLREDTFLGLESLEYLQADYNYISTIEAGAFSKLNKLKVLILNDNLLLSLPSNVFRFVLLTHLDLRGNRLKVMPFAGVLEHIGGIMEIQLEENPWNCTCDLLPLKAWLDTITVFVGEIVCETPFRLHGKDVTQLTRQDLCPRKSASGDSSQRSSHSDTHVQRLTPTTNPALNPTRAPKASRPPKMRNRPTPRVTVSKDRQSFGPIMVYQTKSPVALTCPSSCVCTSQSSDNGLNVNCQERKFTNISDLQPKPTSPKKLYLTGNYLQTVYKNDLLEYSSLDLLHLGNNRIAVIQEGAFTNLTSLRRLYLNGNYLEVLYPSMFDGLQSLQYLYLEYNVIKEIKPLTFDALINLQLLFLNNNLLRSLPDNIFGGTALTRLNLRNNHFSHLPVKGVLDQLPAFIQIDLQENPWDCTCDIMGLKDWTEHANSPVIINEVTCESPAKHAGEILKFLGREAICPENPNLSDGTILSMNHNTDTPRSLSVSPSSYPELHTEVPLSVLILGLLVVFILSVCFGAGLFVFVLKRRKGVPNVPRNATNLDVSSFQLQYGSYNTETNDKADGHVYNYIPPPVGQMCQNPIYMQKEGDPVAYYRNLQDFSYGNLEEKKEEPATLAYTISATELLEKQATPREPELLYQNIAERVKELPSAGLVHYNFCTLPKRQFAPSYESRRQNQDRINKTVLYGTPRKCFVGQSKPDHPLLQAKPQSEPDYLEVLEKQTAISQL.

The first 21 residues, 1–21, serve as a signal peptide directing secretion; the sequence is MLSGVWFLSVLTVAGILQTES. The Extracellular segment spans residues 22 to 622; the sequence is RKTAKDICKI…LHTEVPLSVL (601 aa). Cystine bridges form between Cys29–Cys35 and Cys33–Cys46. LRR repeat units follow at residues 63-84, 87-108, 111-132, 135-156, 159-180, and 182-203; these read RIYQLFLNGNLLTRLYPNEFVN, NAVTLHLGNNGLQEIRPGAFSG, TLKRLHLNNNKLEVLREDTFLG, SLEYLQADYNYISTIEAGAFSK, KLKVLILNDNLLLSLPSNVFRF, and LLTHLDLRGNRLKVMPFAGVLE. The N-linked (GlcNAc...) asparagine glycan is linked to Asn84. The tract at residues 167-215 is required for interaction with PTPRD; the sequence is DNLLLSLPSNVFRFVLLTHLDLRGNRLKVMPFAGVLEHIGGIMEIQLEE. The LRRCT 1 domain occupies 216 to 265; that stretch reads NPWNCTCDLLPLKAWLDTITVFVGEIVCETPFRLHGKDVTQLTRQDLCPR. Asn219 carries an N-linked (GlcNAc...) asparagine glycan. 2 cysteine pairs are disulfide-bonded: Cys220-Cys243 and Cys222-Cys263. The interval 261–322 is disordered; the sequence is DLCPRKSASG…TPRVTVSKDR (62 aa). Low complexity-rich tracts occupy residues 267-276 and 285-300; these read SASGDSSQRS and RLTPTTNPALNPTRAP. The 43-residue stretch at 332–374 folds into the LRRNT domain; the sequence is QTKSPVALTCPSSCVCTSQSSDNGLNVNCQERKFTNISDLQPK. 6 LRR repeats span residues 377–398, 401–422, 425–446, 449–470, 473–494, and 496–517; these read SPKKLYLTGNYLQTVYKNDLLE, SLDLLHLGNNRIAVIQEGAFTN, SLRRLYLNGNYLEVLYPSMFDG, SLQYLYLEYNVIKEIKPLTFDA, NLQLLFLNNNLLRSLPDNIFGG, and ALTRLNLRNNHFSHLPVKGVLD. Asn422 carries an N-linked (GlcNAc...) asparagine glycan. Residues 530 to 581 form the LRRCT 2 domain; the sequence is NPWDCTCDIMGLKDWTEHANSPVIINEVTCESPAKHAGEILKFLGREAICPE. The chain crosses the membrane as a helical span at residues 623 to 643; sequence ILGLLVVFILSVCFGAGLFVF. The Cytoplasmic portion of the chain corresponds to 644–846; it reads VLKRRKGVPN…LEKQTAISQL (203 aa). Tyr757 carries the post-translational modification Phosphotyrosine.

Belongs to the SLITRK family. As to quaternary structure, interacts with PTPRD; this interaction is PTPRD splicing-dependent and may induce pre-synaptic differentiation. Interacts with NTRK2. In terms of tissue distribution, in the adult, significant expression is detected only in the brain. Broadly expressed in embryonic brain with highest expression in ventricular layer, subventricular zone, cortical plate, pyramidal layer of hippocampus, subicular neuroepithelium, thalamus, hypothalamus and spinal cord.

The protein localises to the membrane. Its subcellular location is the cell membrane. It is found in the cell projection. It localises to the dendrite. Its function is as follows. It is involved in synaptogenesis. Promotes excitatory synapse differentiation. Suppresses neurite outgrowth. Involved in the negative regulation of NTRK2. This Mus musculus (Mouse) protein is SLIT and NTRK-like protein 2 (Slitrk2).